The primary structure comprises 452 residues: NADH-cytochrome b5 reductase-like protein alnC (452 aa).

In terms of domain architecture, Cytochrome b5 heme-binding spans 4–80 (PASITLAEVA…LKTLLVGSLQ (77 aa)). Position 33–38 (33–38 (AEYRED)) interacts with FMN. Heme-binding residues include H39 and H63. FMN is bound by residues 80–83 (QSKT) and 116–125 (NDTSKYGQLP). 2 helical membrane-spanning segments follow: residues 120 to 140 (KYGQLPSLVLAGGLALLFFTL) and 166 to 186 (VGFLGGFLTATTLNTAAATFV). In terms of domain architecture, FAD-binding FR-type spans 225–324 (NTQQFLTLVD…RGPFGRYSPS (100 aa)). 302 to 305 (YLLN) contributes to the FAD binding site. NADP(+) contacts are provided by residues 389–390 (GQ) and 395–399 (WKGLR).

The protein belongs to the flavoprotein pyridine nucleotide cytochrome reductase family. Requires FAD as cofactor. FMN serves as cofactor.

It localises to the membrane. It participates in polyketide biosynthesis. Functionally, NADH-cytochrome b5 reductase-like protein; part of the gene cluster that mediates the biosynthesis of asperlin, a polyketide showing anti-inflammatory, antitumor and antibiotic activities. The first step of the asperlin biosynthesis is the production of the intermediate 2,4,6-octatrienoic acid by the highly redusing polyketide synthase alnA with cleavage of the PKS product by the esterase alnB. 2,4,6-octatrienoic acid is further converted to asperlin via several steps involving the remaining enzymes from the cluster. This Emericella nidulans (strain FGSC A4 / ATCC 38163 / CBS 112.46 / NRRL 194 / M139) (Aspergillus nidulans) protein is NADH-cytochrome b5 reductase-like protein alnC.